The sequence spans 314 residues: Probable 2-(5''-triphosphoribosyl)-3'-dephosphocoenzyme-A synthase (314 aa).

This sequence belongs to the CitG/MdcB family.

The catalysed reaction is 3'-dephospho-CoA + ATP = 2'-(5''-triphospho-alpha-D-ribosyl)-3'-dephospho-CoA + adenine. This chain is Probable 2-(5''-triphosphoribosyl)-3'-dephosphocoenzyme-A synthase, found in Photobacterium profundum (strain SS9).